Reading from the N-terminus, the 250-residue chain is Coproheme decarboxylase (250 aa).

Fe-coproporphyrin III contacts are provided by residues arginine 131, 145–149, histidine 172, and glutamine 185; that span reads YPMNK. Residue tyrosine 145 is part of the active site.

Belongs to the ChdC family. Type 1 subfamily. Fe-coproporphyrin III serves as cofactor.

It catalyses the reaction Fe-coproporphyrin III + 2 H2O2 + 2 H(+) = heme b + 2 CO2 + 4 H2O. The catalysed reaction is Fe-coproporphyrin III + H2O2 + H(+) = harderoheme III + CO2 + 2 H2O. It carries out the reaction harderoheme III + H2O2 + H(+) = heme b + CO2 + 2 H2O. It functions in the pathway porphyrin-containing compound metabolism; protoheme biosynthesis. Involved in coproporphyrin-dependent heme b biosynthesis. Catalyzes the decarboxylation of Fe-coproporphyrin III (coproheme) to heme b (protoheme IX), the last step of the pathway. The reaction occurs in a stepwise manner with a three-propionate intermediate. The sequence is that of Coproheme decarboxylase from Staphylococcus aureus (strain bovine RF122 / ET3-1).